Reading from the N-terminus, the 736-residue chain is Polyribonucleotide nucleotidyltransferase (736 aa).

The Mg(2+) site is built by D488 and D494. The 60-residue stretch at 555–614 (PMVQTLEIQKEKIRDVIGLGGKVIKELCKTFDVEIDISENGEVKVWGNVGENVKKAVQSI) folds into the KH domain. The 69-residue stretch at 624–692 (GDIFDGEVVK…HKNRVKLTLR (69 aa)) folds into the S1 motif domain.

Belongs to the polyribonucleotide nucleotidyltransferase family. Mg(2+) is required as a cofactor.

The protein localises to the cytoplasm. The enzyme catalyses RNA(n+1) + phosphate = RNA(n) + a ribonucleoside 5'-diphosphate. Functionally, involved in mRNA degradation. Catalyzes the phosphorolysis of single-stranded polyribonucleotides processively in the 3'- to 5'-direction. This chain is Polyribonucleotide nucleotidyltransferase, found in Orientia tsutsugamushi (strain Ikeda) (Rickettsia tsutsugamushi).